The chain runs to 327 residues: tRNA dimethylallyltransferase (327 aa).

14–21 (GPTASGKT) contributes to the ATP binding site. 16–21 (TASGKT) contributes to the substrate binding site. Interaction with substrate tRNA regions lie at residues 39 to 42 (DSAL) and 163 to 167 (QRIQR).

Belongs to the IPP transferase family. Monomer. The cofactor is Mg(2+).

The enzyme catalyses adenosine(37) in tRNA + dimethylallyl diphosphate = N(6)-dimethylallyladenosine(37) in tRNA + diphosphate. Functionally, catalyzes the transfer of a dimethylallyl group onto the adenine at position 37 in tRNAs that read codons beginning with uridine, leading to the formation of N6-(dimethylallyl)adenosine (i(6)A). The polypeptide is tRNA dimethylallyltransferase (Xanthomonas euvesicatoria pv. vesicatoria (strain 85-10) (Xanthomonas campestris pv. vesicatoria)).